The chain runs to 302 residues: Nuclear egress protein 1 (302 aa).

Residues Met1–Arg17 are compositionally biased toward polar residues. Positions Met1–Asp22 are disordered. The CCCH-type zinc finger occupies Cys102–His227.

This sequence belongs to the herpesviridae NEC1 protein family. As to quaternary structure, forms a heterohexameric complex with NEC2. Interacts with capsid vertex specific component 2/CVC2; this interaction directs the capsid to the host inner nuclear membrane to initiate budding. Post-translationally, phosphorylated at serine residues in the N-terminus. This phosphorylation regulates the localization within the inner nuclear membrane.

Its subcellular location is the host nucleus inner membrane. Functionally, plays an essential role in virion nuclear egress, the first step of virion release from infected cell. Within the host nucleus, NEC1 interacts with the newly formed capsid through the vertexes and directs it to the inner nuclear membrane by associating with NEC2. Induces the budding of the capsid at the inner nuclear membrane as well as its envelopment into the perinuclear space. There, the NEC1/NEC2 complex promotes the fusion of the enveloped capsid with the outer nuclear membrane and the subsequent release of the viral capsid into the cytoplasm where it will reach the secondary budding sites in the host Golgi or trans-Golgi network. The protein is Nuclear egress protein 1 of Homo sapiens (Human).